The primary structure comprises 430 residues: Histidine--tRNA ligase (430 aa).

It belongs to the class-II aminoacyl-tRNA synthetase family. Homodimer.

The protein resides in the cytoplasm. The enzyme catalyses tRNA(His) + L-histidine + ATP = L-histidyl-tRNA(His) + AMP + diphosphate + H(+). This is Histidine--tRNA ligase from Lactococcus lactis subsp. lactis (strain IL1403) (Streptococcus lactis).